A 279-amino-acid polypeptide reads, in one-letter code: Pantothenate synthetase (279 aa).

Residue Met-26–His-33 participates in ATP binding. His-33 acts as the Proton donor in catalysis. (R)-pantoate is bound at residue Gln-57. Gln-57 is a binding site for beta-alanine. Residue Gly-144–Asp-147 coordinates ATP. Position 150 (Gln-150) interacts with (R)-pantoate. Residues Val-173 and Leu-181–Arg-184 contribute to the ATP site.

Belongs to the pantothenate synthetase family. Homodimer.

The protein resides in the cytoplasm. It carries out the reaction (R)-pantoate + beta-alanine + ATP = (R)-pantothenate + AMP + diphosphate + H(+). The protein operates within cofactor biosynthesis; (R)-pantothenate biosynthesis; (R)-pantothenate from (R)-pantoate and beta-alanine: step 1/1. Its function is as follows. Catalyzes the condensation of pantoate with beta-alanine in an ATP-dependent reaction via a pantoyl-adenylate intermediate. This Burkholderia ambifaria (strain MC40-6) protein is Pantothenate synthetase.